A 51-amino-acid chain; its full sequence is Putative protein LomR (51 aa).

The protein belongs to the outer membrane OOP (TC 1.B.6) superfamily. Ail family.

The chain is Putative protein LomR (lomR) from Escherichia coli (strain K12).